The following is a 278-amino-acid chain: HTH-type transcriptional activator RhaS (278 aa).

An HTH araC/xylS-type domain is found at 174 to 272 (NLLLAWLEDH…NWSPRDIRQG (99 aa)). DNA-binding regions (H-T-H motif) lie at residues 191–212 (DAVADQFSLSLRTLHRQLKQQT) and 239–262 (VTDIAYRCGFSDSNHFSTLFRREF).

Binds DNA as a dimer.

The protein resides in the cytoplasm. Functionally, activates expression of the rhaBAD and rhaT operons. This chain is HTH-type transcriptional activator RhaS, found in Escherichia coli O127:H6 (strain E2348/69 / EPEC).